Reading from the N-terminus, the 831-residue chain is Pleckstrin homology-like domain family B member 1 (831 aa).

Residues 1–11 show a composition bias toward basic residues; sequence LTLGARGRRTR. Residues 1-73 form a disordered region; sequence LTLGARGRRT…PIPRERKNSI (73 aa). Arginine 6 bears the Omega-N-methylarginine mark. Serine 12 and serine 14 each carry phosphoserine. Threonine 16 carries the phosphothreonine modification. Phosphoserine is present on residues serine 27, serine 33, serine 45, serine 49, serine 57, serine 72, serine 77, and serine 175. Polar residues predominate over residues 39-51; the sequence is GSLTGASPRQSPH. 2 disordered regions span residues 160-209 and 416-465; these read RSGE…LQGE and NGDM…QNGT. Residues 174 to 188 show a composition bias toward basic and acidic residues; the sequence is ESMERSDEENLKEEC. The stretch at 180 to 306 forms a coiled coil; sequence DEENLKEECS…TETKLFEDLE (127 aa). Phosphoserine occurs at positions 421 and 467. Low complexity predominate over residues 421–442; sequence SPLPRTRSGPLPSSSGSSSSSS. Residues 584–603 are disordered; it reads SMETSISTGGNSACSPDNMS. Positions 610–676 form a coiled coil; sequence MGKIEEMEKM…QQLVEKEVKL (67 aa). Positions 721–824 constitute a PH domain; that stretch reads SKVCRGYLIK…WMDVIVTGAE (104 aa).

In Rattus norvegicus (Rat), this protein is Pleckstrin homology-like domain family B member 1 (Phldb1).